The primary structure comprises 488 residues: MAASATATVGTKGIVRQVIGPVLDVEFPAGKLPSILNALRIEGKNPAGQDVALTAEVQQLLGDHRVRAVAMSGTDGLVRGMEALDTGAPISVPVGEATLGRIFNVLGEPVDEQGDLKNVTTSPIHRSAPSLTDLETKPKVFETGIKVIDLLAPYRQGGKVGLFGGAGVGKTVLIQELINNIAKEHGGVSVFGGVGERTREGNDLYEEFKESGVINSEDLTKSKVALCFGQMNEPPGARMRVGLSALTMAEHFRDVNKQDVLLFIDNIFRFVQAGSEVSALLGRMPSAVGYQPTLGTDVGELQERITSTLEGSITSIQAVYVPADDLTDPAPATTFAHLDATTVLARALAAKGIYPAVDPLDSTSTMLQPSVVGDEHYRTARAVQSTLQRYKELQDIIAILGLDELSEEDRKTVDRARKIEKFLSQPFFVAEIFTGMSGKYVKLEDTIKGFNMILSGELDQLPEQAFYLVGSIDEVKAKAEKLASEAKA.

164 to 171 provides a ligand contact to ATP; the sequence is GGAGVGKT.

The protein belongs to the ATPase alpha/beta chains family. In terms of assembly, F-type ATPases have 2 components, CF(1) - the catalytic core - and CF(0) - the membrane proton channel. CF(1) has five subunits: alpha(3), beta(3), gamma(1), delta(1), epsilon(1). CF(0) has four main subunits: a(1), b(1), b'(1) and c(9-12).

The protein resides in the cellular thylakoid membrane. It carries out the reaction ATP + H2O + 4 H(+)(in) = ADP + phosphate + 5 H(+)(out). Its function is as follows. Produces ATP from ADP in the presence of a proton gradient across the membrane. The catalytic sites are hosted primarily by the beta subunits. This chain is ATP synthase subunit beta, found in Prochlorococcus marinus (strain NATL1A).